Here is a 718-residue protein sequence, read N- to C-terminus: Phenylalanine--tRNA ligase beta subunit (718 aa).

In terms of domain architecture, tRNA-binding spans 40–153; sequence FLNVSKIKFG…KADLKQDPID (114 aa). The 76-residue stretch at 387-462 folds into the B5 domain; the sequence is DKKESFNFVW…RFYGYENLVF (76 aa). Positions 440, 446, 449, and 450 each coordinate Mg(2+).

It belongs to the phenylalanyl-tRNA synthetase beta subunit family. Type 1 subfamily. In terms of assembly, tetramer of two alpha and two beta subunits. The cofactor is Mg(2+).

It is found in the cytoplasm. It carries out the reaction tRNA(Phe) + L-phenylalanine + ATP = L-phenylalanyl-tRNA(Phe) + AMP + diphosphate + H(+). This chain is Phenylalanine--tRNA ligase beta subunit, found in Mycoplasmopsis pulmonis (strain UAB CTIP) (Mycoplasma pulmonis).